The primary structure comprises 168 residues: Small ribosomal subunit protein uS8 (168 aa).

The segment at 59–93 is not found in other S8 sequences; the sequence is EEFKKMKELAEKSPNPKMRRYLQQLIDYNKGTQYP.

Belongs to the universal ribosomal protein uS8 family. Part of the 30S ribosomal subunit. Contacts proteins S5 and S12.

One of the primary rRNA binding proteins, it binds directly to 16S rRNA central domain where it helps coordinate assembly of the platform of the 30S subunit. The chain is Small ribosomal subunit protein uS8 from Aquifex pyrophilus.